The following is a 353-amino-acid chain: Melanin-concentrating hormone receptor 1 (353 aa).

The tract at residues 1-29 (MDLEASLLPTGPNASNTSDGPDNLTSAGS) is disordered. Over 1–44 (MDLEASLLPTGPNASNTSDGPDNLTSAGSPPRTGSISYINIIMP) the chain is Extracellular. The span at 12-29 (PNASNTSDGPDNLTSAGS) shows a compositional bias: polar residues. 3 N-linked (GlcNAc...) asparagine glycosylation sites follow: N13, N16, and N23. Residues 45–67 (SVFGTICLLGIIGNSTVIFAVVK) form a helical membrane-spanning segment. Over 68–79 (KSKLHWCNNVPD) the chain is Cytoplasmic. The helical transmembrane segment at 80–102 (IFIINLSVVDLLFLLGMPFMIHQ) threads the bilayer. Over 103 to 116 (LMGNGVWHFGETMC) the chain is Extracellular. A disulfide bridge links C116 with C194. The helical transmembrane segment at 117–139 (TLITAMDANSQFTSTYILTAMAI) threads the bilayer. Over 140–158 (DRYLATVHPISSTKFRKPS) the chain is Cytoplasmic. A helical transmembrane segment spans residues 159–181 (VATLVICLLWALSFISITPVWLY). At 182-209 (ARLIPFPGGAVGCGIRLPNPDTDLYWFT) the chain is on the extracellular side. The chain crosses the membrane as a helical span at residues 210-232 (LYQFFLAFALPFVVITAAYVRIL). The Cytoplasmic portion of the chain corresponds to 233-252 (QRMTSSVAPASQRSIRLRTK). A helical transmembrane segment spans residues 253 to 275 (RVTRTAIAICLVFFVCWAPYYVL). The Extracellular portion of the chain corresponds to 276-289 (QLTQLSISRPTLTF). A helical membrane pass occupies residues 290–312 (VYLYNAAISLGYANSCLNPFVYI). At 313–353 (VLCETFRKRLVLSVKPAAQGQLRAVSNAQTADEERTESKGT) the chain is on the cytoplasmic side.

Belongs to the G-protein coupled receptor 1 family. Interacts with NCDN. In terms of tissue distribution, highest level in brain, particularly in the frontal cortex and hypothalamus, lower levels in the liver and heart.

The protein resides in the cell membrane. Receptor for melanin-concentrating hormone, coupled to both G proteins that inhibit adenylyl cyclase and G proteins that activate phosphoinositide hydrolysis. This is Melanin-concentrating hormone receptor 1 from Homo sapiens (Human).